The sequence spans 459 residues: N(6)-adenosine-methyltransferase non-catalytic subunit METTL14 (459 aa).

Positions 50 to 73 are disordered; sequence TCRASYDTSAPNAKRKYPDEGEAD. Interaction with METTL3 stretches follow at residues 135–136 and 237–238; these read RD and SG. The positively charged region required for RNA-binding stretch occupies residues 245–254; sequence RVCLRKWGYR. 2 interaction with METTL3 regions span residues 255–258 and 278–287; these read RCED and KAVFQRTKEH. Residues 297–298 are positively charged region required for RNA-binding; that stretch reads RR. The segment at 308–312 is interaction with METTL3; that stretch reads NVDID. The segment at 392–459 is disordered; sequence IERLRPKSPP…GTHRGGFPTR (68 aa). Residues 409–423 show a composition bias toward gly residues; sequence GGGAPRGGGRGGTSA. Basic and acidic residues predominate over residues 425-443; that stretch reads RGERGRERNRTNFRGERGG. Positions 444 to 453 are enriched in gly residues; the sequence is FRGGRGGTHR.

Belongs to the MT-A70-like family. In terms of assembly, heterodimer; heterodimerizes with METTL3 to form an antiparallel heterodimer that constitutes an active methyltransferase. Component of the WMM complex, a N6-methyltransferase complex composed of a catalytic subcomplex, named MAC, and of an associated subcomplex, named MACOM. The MAC subcomplex is composed of METTL3 and METTL14.

It localises to the nucleus. Functionally, the METTL3-METTL14 heterodimer forms a N6-methyltransferase complex that methylates adenosine residues at the N(6) position of some mRNAs and regulates the circadian clock, differentiation of embryonic stem cells and cortical neurogenesis. In the heterodimer formed with METTL3, METTL14 constitutes the RNA-binding scaffold that recognizes the substrate rather than the catalytic core. N6-methyladenosine (m6A), which takes place at the 5'-[AG]GAC-3' consensus sites of some mRNAs, plays a role in mRNA stability and processing. This Gallus gallus (Chicken) protein is N(6)-adenosine-methyltransferase non-catalytic subunit METTL14 (METTL14).